We begin with the raw amino-acid sequence, 371 residues long: Putative RNA-binding protein Luc7-like 1 (371 aa).

Coiled coils occupy residues 87–177 (MDHL…RNSM) and 218–259 (FIQI…LSRR). Positions 232–257 (VAEKQEKRNQDRLRRREEREREERLS) are enriched in basic and acidic residues. The disordered stretch occupies residues 232 to 371 (VAEKQEKRNQ…RSEEKEAGEI (140 aa)). Residues 258 to 317 (RRSGSRTRDRRRSRSRDRRRRRSRSTSRERRKLSRSRSRDRHRRHRSRSRSHSRGHRRAS) are compositionally biased toward basic residues. Composition is skewed to basic and acidic residues over residues 318–351 (RDRS…DWRL) and 361–371 (RRSEEKEAGEI). A phosphoserine mark is found at S332, S336, and S363.

This sequence belongs to the Luc7 family. Ubiquitous.

May bind to RNA via its Arg/Ser-rich domain. The polypeptide is Putative RNA-binding protein Luc7-like 1 (LUC7L) (Homo sapiens (Human)).